Here is a 373-residue protein sequence, read N- to C-terminus: MSMSIDSNKLLLRKGDMKLDNYPTCAVEALTRLETLIASRNKQNMVMQIISEFIFLERTPKDGDVRKSQALPISQMNLFQEFQLIIALIEYFSRPGRDATRNAIFLSLFGSHLTPQRSKLLSRLISTAVSGSVAPLLSSAGTWMQQVGCKTPLSLEVAQNIVSDFISYSRKTPEQLKQLPMVGPHFAANFMVAVADLYLNEQRSPTLNPPPDALLDTITEWMMENPTLCQASQQPLVLPAGAIAMPFTTPLAGLLRWVVLAPLVSNRSAYSNLHLSLLRALQQLVSSGESTALPSQDLMQIVKSLQSYCARLAESKTDPQADAAYQKCMERFAQAVQIALSSNCITNQIQLLCLLESLPPHKLMKIVIEAHKK.

This sequence belongs to the Integrator subunit 15 family. As to quaternary structure, belongs to the multiprotein complex Integrator, at least composed of IntS1, IntS2, IntS3, IntS4, omd/IntS5, IntS6, defl/IntS7, IntS8, IntS9, IntS10, IntS11, IntS12, asun/IntS13, IntS14 and IntS15. The core complex associates with protein phosphatase 2A subunits mts/PP2A and Pp2A-29B, to form the Integrator-PP2A (INTAC) complex.

Its subcellular location is the nucleus. Component of the integrator complex, a multiprotein complex that terminates RNA polymerase II (Pol II) transcription in the promoter-proximal region of genes. The integrator complex provides a quality checkpoint during transcription elongation by driving premature transcription termination of transcripts that are unfavorably configured for transcriptional elongation: the complex terminates transcription by (1) catalyzing dephosphorylation of the C-terminal domain (CTD) of Pol II subunit Rbp1 and Spt5, and (2) degrading the exiting nascent RNA transcript via endonuclease activity. The integrator complex is also involved in the 3'-end processing of the U7 snRNA, and also the spliceosomal snRNAs U1, U2, U4 and U5. The polypeptide is Integrator complex subunit 15 (Drosophila melanogaster (Fruit fly)).